A 199-amino-acid polypeptide reads, in one-letter code: Probable chemoreceptor glutamine deamidase CheD (199 aa).

The protein belongs to the CheD family.

It carries out the reaction L-glutaminyl-[protein] + H2O = L-glutamyl-[protein] + NH4(+). Probably deamidates glutamine residues to glutamate on methyl-accepting chemotaxis receptors (MCPs), playing an important role in chemotaxis. The chain is Probable chemoreceptor glutamine deamidase CheD from Cereibacter sphaeroides (strain ATCC 17023 / DSM 158 / JCM 6121 / CCUG 31486 / LMG 2827 / NBRC 12203 / NCIMB 8253 / ATH 2.4.1.) (Rhodobacter sphaeroides).